The chain runs to 220 residues: Probable 26S proteasome regulatory subunit p27 (220 aa).

The 78-residue stretch at 119–196 folds into the PDZ domain; the sequence is ARRNNDDQAI…PVLLLREGQI (78 aa).

Belongs to the proteasome subunit p27 family. As to quaternary structure, part of a transient complex containing NAS2, RPT4 and RPT5 formed during the assembly of the 26S proteasome.

Functionally, acts as a chaperone during the assembly of the 26S proteasome, specifically of the base subcomplex of the 19S regulatory complex (RC). During the base subcomplex assembly is part of a NAS2:RPT4:RPT5 module; NAS2 is released during the further base assembly process. This Saccharomyces cerevisiae (strain ATCC 204508 / S288c) (Baker's yeast) protein is Probable 26S proteasome regulatory subunit p27 (NAS2).